Reading from the N-terminus, the 212-residue chain is Glycerol-3-phosphate acyltransferase (212 aa).

The next 4 membrane-spanning stretches (helical) occupy residues 3–23, 78–98, 115–135, and 155–177; these read ILLAALVAYLIGSVSFAVVVS, DVAVACVAIAVFLGHLYPVFF, AVHPVLGLATALTWLIVAFFF, and FLFGTSHNPVAWAVLAMSVLLVW.

It belongs to the PlsY family. In terms of assembly, probably interacts with PlsX.

The protein localises to the cell inner membrane. The enzyme catalyses an acyl phosphate + sn-glycerol 3-phosphate = a 1-acyl-sn-glycero-3-phosphate + phosphate. Its pathway is lipid metabolism; phospholipid metabolism. Functionally, catalyzes the transfer of an acyl group from acyl-phosphate (acyl-PO(4)) to glycerol-3-phosphate (G3P) to form lysophosphatidic acid (LPA). This enzyme utilizes acyl-phosphate as fatty acyl donor, but not acyl-CoA or acyl-ACP. This is Glycerol-3-phosphate acyltransferase from Burkholderia ambifaria (strain ATCC BAA-244 / DSM 16087 / CCUG 44356 / LMG 19182 / AMMD) (Burkholderia cepacia (strain AMMD)).